A 485-amino-acid chain; its full sequence is WAS/WASL-interacting protein family member 3 (485 aa).

Residues 1 to 30 (MPVPPPPPPPLPPPPPPLGAPPPPPPPGPP) show a composition bias toward pro residues. Positions 1-485 (MPVPPPPPPP…NSQLSLKALR (485 aa)) are disordered. 3 short sequence motifs (profilin-binding motif) span residues 3–8 (VPPPPP), 11–16 (LPPPPP), and 20–25 (APPPPP). Residues 45–62 (GRSALLADIQQGTRLRKV) form the WH2 domain. Position 46 is an asymmetric dimethylarginine (Arg-46). Residues 58–61 (RLRK) carry the RLRK motif. The span at 63 to 78 (TQINDRSAPQIESSKG) shows a compositional bias: polar residues. A Phosphoserine modification is found at Ser-150. 2 stretches are compositionally biased toward pro residues: residues 165–200 (PVPPRPSVPAPPPPTTPPPPPPPPPPPPPPPLPPAS) and 207–243 (VSPPVPPTKGNPSAVPAPIPCVPPLPPPPPTPPPLPP). At Ser-208 the chain carries Phosphoserine. The span at 244 to 259 (ASALSEKAVRPQLAPL) shows a compositional bias: low complexity. Pro residues-rich tracts occupy residues 260–275 (HLPPIPPPLPLLPPYG) and 293–312 (PPAPPPPPPPPPPPPPPPLP). Residue Ser-394 is modified to Phosphoserine. Positions 396 to 407 (TTELSSKTQQPG) are enriched in polar residues. Over residues 417 to 441 (VIDDFESKFTFHSMEDFPPPDEYKP) the composition is skewed to basic and acidic residues. The short motif at 426–450 (TFHSMEDFPPPDEYKPGQKIYPSKV) is the WASP-binding motif element. Positions 475–485 (RNSQLSLKALR) are enriched in polar residues.

The protein belongs to the verprolin family. In terms of assembly, isoform 1 interacts with WASL (via WH1 domain), and monomeric and filamentous actin. In terms of tissue distribution, detected mainly in brain and at lower levels in heart and lung (at protein level). Also detected in testis but not in kidney, liver or spleen.

The protein resides in the cytoplasm. Its function is as follows. May have a role in spermatogenesis. May be a regulator of cytoskeletal organization. In Rattus norvegicus (Rat), this protein is WAS/WASL-interacting protein family member 3 (Wipf3).